The chain runs to 266 residues: Vesicle-associated protein 4-1 (266 aa).

Positions serine 28–serine 57 are disordered. Residues arginine 76–isoleucine 199 form the MSP domain. The stretch at aspartate 200 to proline 228 forms a coiled coil. A compositionally biased stretch (basic and acidic residues) spans glutamate 219 to proline 229. The segment at glutamate 219 to glutamate 239 is disordered. Residue serine 264 is modified to Phosphoserine.

This sequence belongs to the VAMP-associated protein (VAP) (TC 9.B.17) family.

May play a role in vesicle trafficking. The sequence is that of Vesicle-associated protein 4-1 (PVA41) from Arabidopsis thaliana (Mouse-ear cress).